The following is a 189-amino-acid chain: Large ribosomal subunit protein eL14 (189 aa).

The protein belongs to the eukaryotic ribosomal protein eL14 family.

In terms of biological role, component of the large ribosomal subunit. The ribosome is a large ribonucleoprotein complex responsible for the synthesis of proteins in the cell. This chain is Large ribosomal subunit protein eL14, found in Trypanosoma brucei brucei.